Reading from the N-terminus, the 219-residue chain is Mucosal pentraxin (219 aa).

The first 19 residues, 1 to 19 (MEKLIVGTLLLTVLSGGIS), serve as a signal peptide directing secretion. One can recognise a Pentraxin (PTX) domain in the interval 24-219 (DGKAFIFPQE…YVVTKPKLWT (196 aa)). The cysteines at positions 55 and 114 are disulfide-linked. Ca(2+) is bound by residues Asp77, Asn78, Glu155, Gln156, Asp157, and Gln167.

This sequence belongs to the pentraxin family. Homopentamer. Pentraxin (or pentaxin) have a discoid arrangement of 5 non-covalently bound subunits. The cofactor is Ca(2+). In terms of tissue distribution, expression is restricted to small intestine, stomach and colon. Within colon, expressed in epithelial cells located within the lower to mid region of transverse and distal crypts, but not in proximal colon.

The protein localises to the secreted. The protein is Mucosal pentraxin (Mptx1) of Rattus norvegicus (Rat).